A 420-amino-acid chain; its full sequence is uncharacterized protein (420 aa).

Positions asparagine 7–serine 65 constitute a TRAM domain. Positions 245, 280, 304, and 349 each coordinate S-adenosyl-L-methionine. Cysteine 376 (nucleophile) is an active-site residue.

This sequence belongs to the class I-like SAM-binding methyltransferase superfamily. RNA M5U methyltransferase family.

This is an uncharacterized protein from Corynebacterium diphtheriae (strain ATCC 700971 / NCTC 13129 / Biotype gravis).